Here is a 241-residue protein sequence, read N- to C-terminus: Probable xyloglucan-specific endo-beta-1,4-glucanase A (241 aa).

A signal peptide spans 1-18 (MKFNLALALSLTVATAEA).

This sequence belongs to the glycosyl hydrolase 12 (cellulase H) family.

It is found in the secreted. The enzyme catalyses xyloglucan + H2O = xyloglucan oligosaccharides.. Its function is as follows. Catalyzes endohydrolysis of 1,4-beta-D-glucosidic linkages in xyloglucan with retention of the beta-configuration of the glycosyl residues. Specific for xyloglucan and does not hydrolyze other cell wall components. This chain is Probable xyloglucan-specific endo-beta-1,4-glucanase A (xgeA), found in Aspergillus clavatus (strain ATCC 1007 / CBS 513.65 / DSM 816 / NCTC 3887 / NRRL 1 / QM 1276 / 107).